A 120-amino-acid chain; its full sequence is Alpha-amylase inhibitor Haim-2 (120 aa).

A signal peptide spans 1-32; the sequence is MKRYVCSTFVACVMVLCVIPASGAAAHEAVAE. Intrachain disulfides connect cysteine 43–cysteine 59 and cysteine 77–cysteine 104.

In terms of biological role, inhibits mammalian alpha-amylases specifically but has no action on plant and microbial alpha-amylases. This Streptomyces griseosporeus protein is Alpha-amylase inhibitor Haim-2.